Here is a 407-residue protein sequence, read N- to C-terminus: Arylacetamide deacetylase-like 4 family member 1 (407 aa).

At 1-4 (MLYL) the chain is on the cytoplasmic side. A helical; Signal-anchor for type II membrane protein membrane pass occupies residues 5–25 (VGFLLATVCLLVLGVNVWVLI). Over 26-407 (DHFLTIDVPP…NAVVSYIKDL (382 aa)) the chain is Lumenal. Positions 119-121 (HGG) match the Involved in the stabilization of the negatively charged intermediate by the formation of the oxyanion hole motif. Asn168 is a glycosylation site (N-linked (GlcNAc...) asparagine). Catalysis depends on residues Ser193, Asp347, and His377.

It belongs to the 'GDXG' lipolytic enzyme family.

It localises to the membrane. The sequence is that of Arylacetamide deacetylase-like 4 family member 1 from Mus musculus (Mouse).